The sequence spans 271 residues: uncharacterized protein (271 aa).

Residues 1-20 (MPDLHTLPAGSRPERAIRNN) are disordered.

The protein belongs to the PEP2 family.

This is an uncharacterized protein from Aspergillus terreus (strain NIH 2624 / FGSC A1156).